Consider the following 122-residue polypeptide: MFKKVSKNANRLSRHQRVRNKITGTPERPRLNVYRSLTNIYVQLIDDVAGKTLVAASSLDKEIKDQVSATGNAEAAKLVGQLVGKRALEKGIDTVTFDRGGNIYHGRIQALAEGAREAGLKF.

The interval 1 to 20 (MFKKVSKNANRLSRHQRVRN) is disordered.

Belongs to the universal ribosomal protein uL18 family. Part of the 50S ribosomal subunit; part of the 5S rRNA/L5/L18/L25 subcomplex. Contacts the 5S and 23S rRNAs.

In terms of biological role, this is one of the proteins that bind and probably mediate the attachment of the 5S RNA into the large ribosomal subunit, where it forms part of the central protuberance. The sequence is that of Large ribosomal subunit protein uL18 from Alkaliphilus oremlandii (strain OhILAs) (Clostridium oremlandii (strain OhILAs)).